A 417-amino-acid chain; its full sequence is Serine hydroxymethyltransferase (417 aa).

(6S)-5,6,7,8-tetrahydrofolate-binding positions include L121 and 125–127 (GHL). At K229 the chain carries N6-(pyridoxal phosphate)lysine. 355–357 (SPF) is a (6S)-5,6,7,8-tetrahydrofolate binding site.

It belongs to the SHMT family. As to quaternary structure, homodimer. Requires pyridoxal 5'-phosphate as cofactor.

It is found in the cytoplasm. The enzyme catalyses (6R)-5,10-methylene-5,6,7,8-tetrahydrofolate + glycine + H2O = (6S)-5,6,7,8-tetrahydrofolate + L-serine. The protein operates within one-carbon metabolism; tetrahydrofolate interconversion. It participates in amino-acid biosynthesis; glycine biosynthesis; glycine from L-serine: step 1/1. In terms of biological role, catalyzes the reversible interconversion of serine and glycine with tetrahydrofolate (THF) serving as the one-carbon carrier. This reaction serves as the major source of one-carbon groups required for the biosynthesis of purines, thymidylate, methionine, and other important biomolecules. Also exhibits THF-independent aldolase activity toward beta-hydroxyamino acids, producing glycine and aldehydes, via a retro-aldol mechanism. This Shewanella baltica (strain OS155 / ATCC BAA-1091) protein is Serine hydroxymethyltransferase.